The following is a 298-amino-acid chain: Cyclin-D4-2 (298 aa).

The protein belongs to the cyclin family. Cyclin D subfamily. Interacts with CDKA-1 to form a kinase complex.

Functionally, may promote cell division. The polypeptide is Cyclin-D4-2 (CYCD4-2) (Arabidopsis thaliana (Mouse-ear cress)).